The following is a 260-amino-acid chain: DNA-directed RNA polymerase subunit Rpo3 (260 aa).

This sequence belongs to the archaeal Rpo3/eukaryotic RPB3 RNA polymerase subunit family. As to quaternary structure, part of the RNA polymerase complex.

It is found in the cytoplasm. It catalyses the reaction RNA(n) + a ribonucleoside 5'-triphosphate = RNA(n+1) + diphosphate. In terms of biological role, DNA-dependent RNA polymerase (RNAP) catalyzes the transcription of DNA into RNA using the four ribonucleoside triphosphates as substrates. The chain is DNA-directed RNA polymerase subunit Rpo3 from Pyrobaculum aerophilum (strain ATCC 51768 / DSM 7523 / JCM 9630 / CIP 104966 / NBRC 100827 / IM2).